We begin with the raw amino-acid sequence, 109 residues long: Nucleoid-associated protein Spro_1136 (109 aa).

2 disordered regions span residues 1–21 and 90–109; these read MFGKGGLGNLMKQAQQMQEKM and EKMASVSNGMQLPPGFKMPF. Low complexity predominate over residues 11-21; sequence MKQAQQMQEKM.

Belongs to the YbaB/EbfC family. Homodimer.

It localises to the cytoplasm. Its subcellular location is the nucleoid. Binds to DNA and alters its conformation. May be involved in regulation of gene expression, nucleoid organization and DNA protection. The chain is Nucleoid-associated protein Spro_1136 from Serratia proteamaculans (strain 568).